The sequence spans 1036 residues: Isoleucine--tRNA ligase (1036 aa).

A 'HIGH' region motif is present at residues P46–H56. A 'KMSKS' region motif is present at residues K589–R593. K592 contributes to the ATP binding site.

The protein belongs to the class-I aminoacyl-tRNA synthetase family. IleS type 2 subfamily. Monomer. Zn(2+) serves as cofactor.

It is found in the cytoplasm. It carries out the reaction tRNA(Ile) + L-isoleucine + ATP = L-isoleucyl-tRNA(Ile) + AMP + diphosphate. In terms of biological role, catalyzes the attachment of isoleucine to tRNA(Ile). As IleRS can inadvertently accommodate and process structurally similar amino acids such as valine, to avoid such errors it has two additional distinct tRNA(Ile)-dependent editing activities. One activity is designated as 'pretransfer' editing and involves the hydrolysis of activated Val-AMP. The other activity is designated 'posttransfer' editing and involves deacylation of mischarged Val-tRNA(Ile). The sequence is that of Isoleucine--tRNA ligase from Chlamydia muridarum (strain MoPn / Nigg).